Here is a 27-residue protein sequence, read N- to C-terminus: Trypsin inhibitor 1 (27 aa).

As to quaternary structure, homodimer. Contains disulfide bonds. Post-translationally, glycosylated.

Its function is as follows. Inhibits trypsin (IC(50)=1.25 uM) but not chymotrypsin or papain. Has antibacterial activity against S.enterica ATCC 10708 (MIC=5 ug/ml) and S.aureus ATCC 25923 (MIC=5 ug/ml) but not against B.subtilis ATCC 6633 or P.aeruginosa ATCC 25619. Has no hemolytic activity against human erythrocytes. Is not toxic to mice. The protein is Trypsin inhibitor 1 of Jatropha curcas (Barbados nut).